Reading from the N-terminus, the 562-residue chain is Protein wntless (562 aa).

The Cytoplasmic portion of the chain corresponds to 1–13; it reads MSGTILENLSGRK. A helical transmembrane segment spans residues 14–34; the sequence is LSILVATLLLCQVLCFLLGGL. Residues 35–239 are Lumenal-facing; it reads YAPLPAGHVT…AIHQNGGFTQ (205 aa). N-linked (GlcNAc...) asparagine glycosylation is present at Asn-58. The chain crosses the membrane as a helical span at residues 240 to 260; sequence IWLLLKTMLFPFVVGIMIWFW. Over 261 to 270 the chain is Cytoplasmic; sequence RRVHLLQRSP. Residues 271 to 291 form a helical membrane-spanning segment; sequence ALLEYMLIYLGAALTFLNLPL. Residues 292–311 lie on the Lumenal side of the membrane; sequence EYLSLVYEMPYMLLLSDIRQ. A helical transmembrane segment spans residues 312 to 332; that stretch reads GIFYAMLLTFWLVFAGEHMLI. Residues 333–344 are Cytoplasmic-facing; the sequence is QDAPNKSTIRSR. Residues 345–365 traverse the membrane as a helical segment; the sequence is YWKHLSAVVVGCISLFVFDIC. Over 366 to 390 the chain is Lumenal; it reads ERGVQLRNPFYSIWTTPLGAKVAMT. A helical transmembrane segment spans residues 391–411; sequence FIVLAGVSAAIYFLFLCYMIW. Topologically, residues 412–441 are cytoplasmic; the sequence is KVFRNIGDKRTSLPSMSQARRLHYEGLIYR. Residues 442–462 form a helical membrane-spanning segment; it reads FKFLMLATLVCAALTVAGFIM. Residues 463-482 lie on the Lumenal side of the membrane; the sequence is GQMAEGQWDWNDNVAIQPTS. The helical transmembrane segment at 483 to 503 threads the bilayer; the sequence is AFLTGVYGMWNIYIFALLILY. Residues 504–562 are Cytoplasmic-facing; the sequence is APSHKQWPAMHHSDETTQSNENIVASAASEEIEFSHLPSDSNPSEISSLTSFTRKVAFD.

Belongs to the wntless family. Interacts with wg; in the Golgi. Interacts with Vps35, a component of the retromer complex; wls stability is regulated by Vps35.

The protein resides in the presynaptic cell membrane. It is found in the postsynaptic cell membrane. Its subcellular location is the cell membrane. The protein localises to the endoplasmic reticulum membrane. It localises to the endosome membrane. The protein resides in the golgi apparatus membrane. A segment polarity gene required for wingless (wg)-dependent patterning processes, acting in both wg-sending cells and wg-target cells. In non-neuronal cells wls directs wg secretion. The wls traffic loop encompasses the Golgi, the cell surface, an endocytic compartment and a retrograde route leading back to the Golgi, and involves clathrin-mediated endocytosis and the retromer complex (a conserved protein complex consisting of Vps35 and Vps26). In neuronal cells (the larval motorneuron NMJ), the wg signal moves across the synapse via the release of wls-containing exosome-like vesicles. Postsynaptic wls is required for the trafficking of fz2 through the fz2-interacting protein Grip. In Drosophila sechellia (Fruit fly), this protein is Protein wntless.